The following is a 172-amino-acid chain: C-phycocyanin-2 beta subunit (172 aa).

At asparagine 72 the chain carries N4-methylasparagine. 2 residues coordinate (2R,3E)-phycocyanobilin: cysteine 82 and cysteine 153.

This sequence belongs to the phycobiliprotein family. Heterodimer of an alpha and a beta subunit, which further assembles into trimers and the trimers into hexamers. Contains two covalently linked bilin chromophores.

Its subcellular location is the cellular thylakoid membrane. Light-harvesting photosynthetic bile pigment-protein from the phycobiliprotein complex (phycobilisome, PBS). Phycocyanin is the major phycobiliprotein in the PBS rod. This chain is C-phycocyanin-2 beta subunit (cpcB2), found in Pseudanabaena tenuis (strain PCC 7409).